The chain runs to 240 residues: Seed lectin (240 aa).

Asparagine 111 carries N-linked (GlcNAc...) asparagine glycosylation. Positions 123 and 125 each coordinate Mn(2+). Ca(2+)-binding residues include aspartate 125, asparagine 129, and aspartate 132. Mn(2+) contacts are provided by aspartate 132 and histidine 137. Residue asparagine 183 is glycosylated (N-linked (GlcNAc...) asparagine).

It belongs to the leguminous lectin family. In terms of assembly, homotetramer. In terms of processing, partially N-glycosylated at Asn-111 and Asn-183 with the heptasaccharide [(beta-xylosyl-1,2)(alpha-mannosyl-1,6)(alpha-mannosyl-1,3)]beta-manosyl-1,4-GlcNAC-beta-1,4-GlcNAc-beta-1,4 [alpha-fucosyl-1,3]GlcNAc. A small proportion of alpha chains are proteolytically cleaved at 114-115 into gamma and beta chains. This is probably dependent on the deglycosylation of Asn-111. As to expression, seed.

Lectin that binds galactose. The chain is Seed lectin from Vatairea macrocarpa.